The following is a 375-amino-acid chain: Tubulinyl-Tyr carboxypeptidase 1 (375 aa).

The span at 1–33 (MPGGKKVVPSGSSSASPNAAATTTAAAAAAAAA) shows a compositional bias: low complexity. Residues 1–69 (MPGGKKVVPS…EEDLRDGGVP (69 aa)) form a disordered region. Over residues 53-63 (EEPEEEGEEDL) the composition is skewed to acidic residues. Active-site residues include C179, H214, and S231. The disordered stretch occupies residues 309-375 (RDMRLKIGKG…PDLSGYQIRV (67 aa)). An involved in heparin-binding and antiangiogenic activity region spans residues 329 to 375 (KKDVSSPQRAQSSPHRRNSRSERRPSGEKKPAEPKAMPDLSGYQIRV). Basic and acidic residues predominate over residues 347–361 (SRSERRPSGEKKPAE).

It belongs to the transglutaminase-like superfamily. Vasohibin family. As to quaternary structure, interacts with SVBP; interaction enhances VASH1 tyrosine carboxypeptidase activity. Ubiquitinated in vitro. In terms of tissue distribution, expressed at low level in proliferating endothelial cells at the sprouting front but highly expressed in nonproliferating endothelial cells in the termination zone.

The protein localises to the cytoplasm. It is found in the secreted. The enzyme catalyses C-terminal L-alpha-aminoacyl-L-glutamyl-L-glutamyl-L-tyrosyl-[tubulin] + H2O = C-terminal L-alpha-aminoacyl-L-glutamyl-L-glutamyl-[tubulin] + L-tyrosine. Its function is as follows. Tyrosine carboxypeptidase that removes the C-terminal tyrosine residue of alpha-tubulin, thereby regulating microtubule dynamics and function. Acts as an angiogenesis inhibitor: inhibits migration, proliferation and network formation by endothelial cells as well as angiogenesis. This inhibitory effect is selective to endothelial cells as it does not affect the migration of smooth muscle cells or fibroblasts. The sequence is that of Tubulinyl-Tyr carboxypeptidase 1 from Mus musculus (Mouse).